Here is a 353-residue protein sequence, read N- to C-terminus: Ribosome biogenesis protein BRX1 homolog (353 aa).

The span at 1–10 (MAATKRKRRG) shows a compositional bias: basic residues. Residues 1-46 (MAATKRKRRGGFAVQAKKPKRNEKDAEPPAKRHATAEEVEEEERDR) are disordered. The segment covering 22 to 36 (NEKDAEPPAKRHATA) has biased composition (basic and acidic residues). One can recognise a Brix domain in the interval 60–249 (ERILIFSSRG…LIKIFQGSFG (190 aa)). Lys160 is covalently cross-linked (Glycyl lysine isopeptide (Lys-Gly) (interchain with G-Cter in SUMO2)). At Ser261 the chain carries Phosphoserine. Residue Lys276 is modified to N6-acetyllysine. Glycyl lysine isopeptide (Lys-Gly) (interchain with G-Cter in SUMO2) cross-links involve residues Lys314 and Lys322.

The protein belongs to the BRX1 family.

Its subcellular location is the nucleus. It is found in the nucleolus. Its function is as follows. Required for biogenesis of the 60S ribosomal subunit. In Pongo abelii (Sumatran orangutan), this protein is Ribosome biogenesis protein BRX1 homolog (BRIX1).